Here is a 413-residue protein sequence, read N- to C-terminus: Peptide chain release factor 1, mitochondrial (413 aa).

The transit peptide at M1–Y40 directs the protein to the mitochondrion. Q287 carries the post-translational modification N5-methylglutamine.

This sequence belongs to the prokaryotic/mitochondrial release factor family. In terms of processing, methylation increases the termination efficiency of RF1. In terms of tissue distribution, mostly expressed in seedlings, stems and adult plants, and, to a lower extent, in siliques. Barely detected in etiolated seedlings and roots.

It is found in the mitochondrion. In terms of biological role, peptide chain release factor 1 directs the termination of translation in response to the peptide chain termination codons UAG and UAA in mitochondria. In Arabidopsis thaliana (Mouse-ear cress), this protein is Peptide chain release factor 1, mitochondrial.